A 238-amino-acid chain; its full sequence is ATP synthase subunit a (238 aa).

5 helical membrane-spanning segments follow: residues 15-35, 76-96, 111-131, 167-187, and 208-230; these read IFNLTMLAMTLLIVGVIFVFI, YSLFFLCLFLFMVIANNLGLM, PTANLQYDLTLSFLVILLTHI, LALRIFGNIFAGEVMTSLLLL, and AFSVFISCIQAYVFTLLTSVYLG.

Belongs to the ATPase A chain family. As to quaternary structure, F-type ATPases have 2 components, CF(1) - the catalytic core - and CF(0) - the membrane proton channel. CF(1) has five subunits: alpha(3), beta(3), gamma(1), delta(1), epsilon(1). CF(0) has three main subunits: a(1), b(2) and c(9-12). The alpha and beta chains form an alternating ring which encloses part of the gamma chain. CF(1) is attached to CF(0) by a central stalk formed by the gamma and epsilon chains, while a peripheral stalk is formed by the delta and b chains.

It is found in the cell membrane. Functionally, key component of the proton channel; it plays a direct role in the translocation of protons across the membrane. The polypeptide is ATP synthase subunit a (Streptococcus pneumoniae serotype 19F (strain G54)).